A 434-amino-acid chain; its full sequence is Nuclear envelope integral membrane protein 1b (434 aa).

Positions 1–29 (MAGEVEGRGCGFSLGVLVTLLVLPLPSLC) are cleaved as a signal peptide. The next 5 membrane-spanning stretches (helical) occupy residues 151-171 (PRLF…DTLS), 175-195 (LFFY…ILVF), 206-226 (PFFA…QLVF), 239-259 (YLIV…YIYG), and 280-300 (LLMY…VIAF). The segment at 176–287 (FFYSTGITVG…GLLLMYVSVQ (112 aa)) is a; required for its colocalization with lamins at the nuclear envelope. The Nuclear localization signal motif lies at 317–325 (RKIKLKRAK). The tract at residues 326 to 395 (PGPPRLLTEE…LTPNEVSVHE (70 aa)) is b; interaction with ran. The interaction with banf1-a and banf1-b stretch occupies residues 326–434 (PGPPRLLTEE…PLYPIPRSVF (109 aa)). The interval 368-375 (SRIQSPKR) is BAF-binding site (BBS); essential for interaction with banf1-a, banf1-b and ran.

It belongs to the NEMP family. As to quaternary structure, interacts with banf1-a and banf1-b. Interacts with ran-gtp. In terms of processing, phosphorylated.

It localises to the nucleus inner membrane. The protein localises to the nucleus envelope. In concert with ran, required for proper eye development. May be involved in the expression of early eye marker genes. Contributes to nuclear envelope stiffness in germ cells. Required for fertility. Essential for normal erythropoiesis. Required for efficient nuclear envelope opening and enucleation during the late stages of erythroblast maturation. This is Nuclear envelope integral membrane protein 1b (nemp1b) from Xenopus laevis (African clawed frog).